We begin with the raw amino-acid sequence, 519 residues long: Serine/threonine-protein kinase RIO3 (519 aa).

A phosphoserine mark is found at Ser-8 and Ser-112. Position 122 is a phosphotyrosine (Tyr-122). Positions 122–159 (YEDSDSSEDEVDWQDTRDDPYRPAKPIPTPKKGFIGKG) are disordered. Acidic residues predominate over residues 124–134 (DSDSSEDEVDW). A phosphoserine mark is found at Ser-125, Ser-127, and Ser-128. One can recognise a Protein kinase domain in the interval 251–519 (ETITGCISTG…DGGPPILYDE (269 aa)). Residues 257–265 (ISTGKESVV) and Lys-290 contribute to the ATP site. The active-site Proton acceptor is Asp-406.

Belongs to the protein kinase superfamily. RIO-type Ser/Thr kinase family. As to quaternary structure, interacts with CASP10. Interacts with IRF3; RIOK3 probably mediates the interaction of TBK1 with IRF3. Associated with 40S pre-ribosomal particles. Mg(2+) is required as a cofactor. Autophosphorylated (in vitro).

It is found in the cytoplasm. The catalysed reaction is L-seryl-[protein] + ATP = O-phospho-L-seryl-[protein] + ADP + H(+). It catalyses the reaction L-threonyl-[protein] + ATP = O-phospho-L-threonyl-[protein] + ADP + H(+). Involved in regulation of type I interferon (IFN)-dependent immune response which plays a critical role in the innate immune response against DNA and RNA viruses. May act as an adapter protein essential for the recruitment of TBK1 to IRF3. Phosphorylates IFIH1 within the C-terminal region interfering with IFIH1 filament assembly on long dsRNA and resulting in attenuated IFIH1-signaling. Can inhibit CASP10 isoform 7-mediated activation of the NF-kappaB signaling pathway. May play a role in the biogenesis of the 40S ribosomal subunit. Involved in the processing of 21S pre-rRNA to the mature 18S rRNA. This is Serine/threonine-protein kinase RIO3 (RIOK3) from Bos taurus (Bovine).